Consider the following 345-residue polypeptide: S-adenosylmethionine:tRNA ribosyltransferase-isomerase (345 aa).

This sequence belongs to the QueA family. Monomer.

Its subcellular location is the cytoplasm. The enzyme catalyses 7-aminomethyl-7-carbaguanosine(34) in tRNA + S-adenosyl-L-methionine = epoxyqueuosine(34) in tRNA + adenine + L-methionine + 2 H(+). Its pathway is tRNA modification; tRNA-queuosine biosynthesis. Its function is as follows. Transfers and isomerizes the ribose moiety from AdoMet to the 7-aminomethyl group of 7-deazaguanine (preQ1-tRNA) to give epoxyqueuosine (oQ-tRNA). The protein is S-adenosylmethionine:tRNA ribosyltransferase-isomerase of Azoarcus sp. (strain BH72).